We begin with the raw amino-acid sequence, 244 residues long: Lytic polysaccharide monooxygenase-like protein ANIA_04702 (244 aa).

An N-terminal signal peptide occupies residues 1 to 23 (MLMSTSPSPWLAAAMLCIGLANA). His24 is a Cu(2+) binding site. His24 bears the Methylhistidine mark. Asn57, Asn80, Asn118, Asn159, Asn192, and Asn198 each carry an N-linked (GlcNAc...) asparagine glycan. 2 disulfide bridges follow: Cys72-Cys177 and Cys142-Cys196. A lipid anchor (GPI-anchor amidated asparagine) is attached at Asn215. Residues 216-244 (AGLEAVTVPSFLTAVVPTFLGIAYGLLMA) constitute a propeptide, removed in mature form.

The protein belongs to the X325 family. Cu(2+) is required as a cofactor. Post-translationally, the catalytically essential N-terminal histidine His-24 is post-translationally modified by methylation to prevent protonation of the histidine side chain, and protect the critical active site of the enzyme from oxidative damage.

The protein localises to the cell membrane. Functionally, lytic polysaccharide monooxygenase-like protein that has diverged to biological functions other than polysaccharide degradation since it does not perform oxidative cleavage of polysaccharides. Acts as a cell surface-bound protein that functions in the copper-accumulation pathway. May also act as the major cell wall sensor that regulates MAP kinase-dependent hyphal anastomosis, the fusion of hyphal cells. The chain is Lytic polysaccharide monooxygenase-like protein ANIA_04702 from Emericella nidulans (strain FGSC A4 / ATCC 38163 / CBS 112.46 / NRRL 194 / M139) (Aspergillus nidulans).